Here is a 615-residue protein sequence, read N- to C-terminus: UvrABC system protein C (615 aa).

Residues 14–91 (TSPGCYIHKD…IKENKPKYNI (78 aa)) form the GIY-YIG domain. In terms of domain architecture, UVR spans 196–231 (NKIIDELKGKMAAAAQTMEFERAAEYRDLIQAIGTL).

Belongs to the UvrC family. As to quaternary structure, interacts with UvrB in an incision complex.

Its subcellular location is the cytoplasm. Its function is as follows. The UvrABC repair system catalyzes the recognition and processing of DNA lesions. UvrC both incises the 5' and 3' sides of the lesion. The N-terminal half is responsible for the 3' incision and the C-terminal half is responsible for the 5' incision. This is UvrABC system protein C from Streptococcus pneumoniae (strain ATCC 700669 / Spain 23F-1).